A 434-amino-acid chain; its full sequence is Adenylosuccinate synthetase (434 aa).

GTP contacts are provided by residues 22-28 and 50-52; these read GDEGKGK and GHT. Residue Asp23 is the Proton acceptor of the active site. The Mg(2+) site is built by Asp23 and Gly50. IMP-binding positions include 23–26, 48–51, Thr139, Arg153, Gln234, Thr249, and Arg313; these read DEGK and NAGH. Residue His51 is the Proton donor of the active site. 309–315 provides a ligand contact to substrate; it reads ATTGRKR. GTP contacts are provided by residues Arg315, 341 to 343, and 423 to 425; these read KLD and SVG.

Belongs to the adenylosuccinate synthetase family. In terms of assembly, homodimer. Mg(2+) is required as a cofactor.

It is found in the cytoplasm. It carries out the reaction IMP + L-aspartate + GTP = N(6)-(1,2-dicarboxyethyl)-AMP + GDP + phosphate + 2 H(+). It functions in the pathway purine metabolism; AMP biosynthesis via de novo pathway; AMP from IMP: step 1/2. In terms of biological role, plays an important role in the de novo pathway of purine nucleotide biosynthesis. Catalyzes the first committed step in the biosynthesis of AMP from IMP. The protein is Adenylosuccinate synthetase of Chlorobium chlorochromatii (strain CaD3).